Reading from the N-terminus, the 218-residue chain is Methylthioribulose-1-phosphate dehydratase (218 aa).

Zn(2+) contacts are provided by histidine 107 and histidine 109.

This sequence belongs to the aldolase class II family. MtnB subfamily. The cofactor is Zn(2+).

It carries out the reaction 5-(methylsulfanyl)-D-ribulose 1-phosphate = 5-methylsulfanyl-2,3-dioxopentyl phosphate + H2O. The protein operates within amino-acid biosynthesis; L-methionine biosynthesis via salvage pathway; L-methionine from S-methyl-5-thio-alpha-D-ribose 1-phosphate: step 2/6. Its function is as follows. Catalyzes the dehydration of methylthioribulose-1-phosphate (MTRu-1-P) into 2,3-diketo-5-methylthiopentyl-1-phosphate (DK-MTP-1-P). This is Methylthioribulose-1-phosphate dehydratase from Xylella fastidiosa (strain 9a5c).